A 475-amino-acid polypeptide reads, in one-letter code: Ribulose bisphosphate carboxylase large chain (475 aa).

Positions 1–2 (MS) are excised as a propeptide. Proline 3 bears the N-acetylproline mark. Lysine 14 is subject to N6,N6,N6-trimethyllysine. 2 residues coordinate substrate: asparagine 123 and threonine 173. Residue lysine 175 is the Proton acceptor of the active site. Lysine 177 contributes to the substrate binding site. Mg(2+)-binding residues include lysine 201, aspartate 203, and glutamate 204. Lysine 201 carries the N6-carboxylysine modification. The active-site Proton acceptor is histidine 294. 3 residues coordinate substrate: arginine 295, histidine 327, and serine 379.

This sequence belongs to the RuBisCO large chain family. Type I subfamily. Heterohexadecamer of 8 large chains and 8 small chains; disulfide-linked. The disulfide link is formed within the large subunit homodimers. The cofactor is Mg(2+). In terms of processing, the disulfide bond which can form in the large chain dimeric partners within the hexadecamer appears to be associated with oxidative stress and protein turnover.

It is found in the plastid. The protein localises to the chloroplast. The catalysed reaction is 2 (2R)-3-phosphoglycerate + 2 H(+) = D-ribulose 1,5-bisphosphate + CO2 + H2O. The enzyme catalyses D-ribulose 1,5-bisphosphate + O2 = 2-phosphoglycolate + (2R)-3-phosphoglycerate + 2 H(+). In terms of biological role, ruBisCO catalyzes two reactions: the carboxylation of D-ribulose 1,5-bisphosphate, the primary event in carbon dioxide fixation, as well as the oxidative fragmentation of the pentose substrate in the photorespiration process. Both reactions occur simultaneously and in competition at the same active site. The protein is Ribulose bisphosphate carboxylase large chain of Keteleeria davidiana (David's keteleeria).